Here is a 660-residue protein sequence, read N- to C-terminus: Replication protein E1 (660 aa).

The interval 1–60 is disordered; that stretch reads MADNSGTEGEEEDCSEAERAGGWFMVEAIVDRRTGDTISSDEDEEDEGEDMVDFIDDRPI. Residues 39-54 are compositionally biased toward acidic residues; that stretch reads SSDEDEEDEGEDMVDF. The short motif at 87 to 89 is the Nuclear localization signal element; that stretch reads KRK. A phosphoserine; by host mark is found at serine 93, serine 97, serine 109, and serine 122. Positions 108 to 117 match the Nuclear export signal motif; that stretch reads LSPRLDAIKL. The segment at 128–196 is disordered; the sequence is LFQLPDSGYG…DGEESQPLST (69 aa). Residues 136–163 are compositionally biased toward polar residues; sequence YGQTQVDTDTGPSQVQDGCETGDQNGRQ. Basic and acidic residues predominate over residues 169-186; sequence SGTKDGENGSQEEERAGG. Positions 197–363 are DNA-binding region; that stretch reads ETEKGACGVL…QTMVGHALQE (167 aa). One can recognise an SF3 helicase domain in the interval 462-612; it reads VEFIPFLCAF…CPLTSKGEPV (151 aa). Position 488–495 (488–495) interacts with ATP; that stretch reads GPADTGKS. Lysine 569 is covalently cross-linked (Glycyl lysine isopeptide (Lys-Gly) (interchain with G-Cter in SUMO)). Over residues 635 to 644 the composition is skewed to acidic residues; the sequence is DPDDEEENGE. Residues 635 to 660 form a disordered region; the sequence is DPDDEEENGEPSEPFRCVPGQNTRTV.

This sequence belongs to the papillomaviridae E1 protein family. In terms of assembly, can form hexamers. Interacts with E2 protein; this interaction increases E1 DNA binding specificity. Interacts with host DNA polymerase subunit POLA2. Interacts with host single stranded DNA-binding protein RPA1. Interacts with host TOP1; this interaction stimulates the enzymatic activity of TOP1. In terms of processing, phosphorylated. Sumoylated.

It is found in the host nucleus. It carries out the reaction Couples ATP hydrolysis with the unwinding of duplex DNA by translocating in the 3'-5' direction.. It catalyses the reaction ATP + H2O = ADP + phosphate + H(+). ATP-dependent DNA 3'-5' helicase required for initiation of viral DNA replication. It forms a complex with the viral E2 protein. The E1-E2 complex binds to the replication origin which contains binding sites for both proteins. During the initial step, a dimer of E1 interacts with a dimer of protein E2 leading to a complex that binds the viral origin of replication with high specificity. Then, a second dimer of E1 displaces the E2 dimer in an ATP-dependent manner to form the E1 tetramer. Following this, two E1 monomers are added to each half of the site, which results in the formation of two E1 trimers on the viral ori. Subsequently, two hexamers will be created. The double hexamer acts as a bi-directional helicase machinery and unwinds the viral DNA and then recruits the host DNA polymerase to start replication. This is Replication protein E1 from Human papillomavirus 29.